The chain runs to 115 residues: ComG operon protein 5 (115 aa).

The propeptide at 1–7 (MWRENKG) is leader sequence. F8 is subject to N-methylphenylalanine. Residues 13–31 (TMSALSLWLFVLLTVVPLW) traverse the membrane as a helical segment.

Post-translationally, processing of ComGE in competent cells requires ComC.

It is found in the cell membrane. It localises to the cell surface. Functionally, required for transformation and DNA binding. This Bacillus subtilis (strain 168) protein is ComG operon protein 5 (comGE).